Here is a 763-residue protein sequence, read N- to C-terminus: Probable ubiquitin carboxyl-terminal hydrolase MINDY-4 (763 aa).

The residue at position 143 (serine 143) is a Phosphoserine. Residues 154–368 (SSKRSSHKSR…SQPASLRKNQ (215 aa)) are disordered. Over residues 180-202 (EKTDKLPMSEPSLDTKRMGEKVR) the composition is skewed to basic and acidic residues. Phosphoserine is present on residues serine 220 and serine 224. Positions 252-261 (ELSTHTSTCP) are enriched in polar residues. Positions 267-278 (PASSTASTSRSP) are enriched in low complexity. Residue serine 296 is modified to Phosphoserine. The span at 346–355 (TQERPERAFE) shows a compositional bias: basic and acidic residues. Residues 357–368 (QGSQPASLRKNQ) are compositionally biased toward polar residues. Cysteine 463 (nucleophile) is an active-site residue. The Proton acceptor role is filled by histidine 683.

It belongs to the MINDY deubiquitinase family. FAM188 subfamily.

The enzyme catalyses Thiol-dependent hydrolysis of ester, thioester, amide, peptide and isopeptide bonds formed by the C-terminal Gly of ubiquitin (a 76-residue protein attached to proteins as an intracellular targeting signal).. Probable hydrolase that can remove 'Lys-48'-linked conjugated ubiquitin from proteins. The protein is Probable ubiquitin carboxyl-terminal hydrolase MINDY-4 (MINDY4) of Bos taurus (Bovine).